Here is a 193-residue protein sequence, read N- to C-terminus: Cytidylate kinase (193 aa).

12-20 contributes to the ATP binding site; that stretch reads GLAGSGTTT.

Belongs to the cytidylate kinase family. Type 2 subfamily.

It is found in the cytoplasm. It catalyses the reaction CMP + ATP = CDP + ADP. The catalysed reaction is dCMP + ATP = dCDP + ADP. The protein is Cytidylate kinase of Thermococcus sibiricus (strain DSM 12597 / MM 739).